Here is an 887-residue protein sequence, read N- to C-terminus: Alanine--tRNA ligase (887 aa).

Residues His-564, His-568, Cys-676, and His-680 each coordinate Zn(2+).

It belongs to the class-II aminoacyl-tRNA synthetase family. The cofactor is Zn(2+).

It is found in the cytoplasm. It carries out the reaction tRNA(Ala) + L-alanine + ATP = L-alanyl-tRNA(Ala) + AMP + diphosphate. Catalyzes the attachment of alanine to tRNA(Ala) in a two-step reaction: alanine is first activated by ATP to form Ala-AMP and then transferred to the acceptor end of tRNA(Ala). Also edits incorrectly charged Ser-tRNA(Ala) and Gly-tRNA(Ala) via its editing domain. The sequence is that of Alanine--tRNA ligase from Agrobacterium fabrum (strain C58 / ATCC 33970) (Agrobacterium tumefaciens (strain C58)).